Reading from the N-terminus, the 336-residue chain is UPF0324 membrane protein lp_2841 (336 aa).

A run of 9 helical transmembrane segments spans residues 5–22 (GILP…ISQG), 26–48 (FVPA…NTFL), 84–106 (IGGF…ALWL), 116–138 (VRML…IAPV), 150–172 (ITLV…MAVF), 204–226 (TVQF…VLIF), 255–277 (WYVA…AIIG), 282–304 (TISS…LVNF), and 311–333 (LALY…ITLL).

It belongs to the UPF0324 family.

It is found in the cell membrane. This Lactiplantibacillus plantarum (strain ATCC BAA-793 / NCIMB 8826 / WCFS1) (Lactobacillus plantarum) protein is UPF0324 membrane protein lp_2841.